A 388-amino-acid polypeptide reads, in one-letter code: Protein DVU_0534 (388 aa).

10 helical membrane passes run 10–31 (LMTPGNIITGIILVMGLVLTVL), 57–78 (LLCGVALAAGGYVTSASCYLFG), 89–106 (AITTAFLGYFFVVVALNY), 130–144 (EVGLCVATYLTVLFV), 166–191 (LTLVLTIFGVVLSTLHQSSLGALFLI), 199–222 (LWYSSFLPVFFFISSMVAGLSMVI), 254–265 (AASFVLAGYFMI), 291–306 (MLGFVALPSFLYALGV), 316–328 (FASVLGVLGIVMN), and 354–368 (IGISVFIVTSIITVY).

It belongs to the NrfD family.

It is found in the cell membrane. HMWC (high-molecular-weight cytochrome c), ORF2, ORF3, ORF4, ORF5 and ORF6 in the HMC operon form a transmembrane protein complex that allows electron flow from the periplasmic hydrogenase to the cytoplasmic enzymes that catalyze reduction of sulfates. This chain is Protein DVU_0534, found in Nitratidesulfovibrio vulgaris (strain ATCC 29579 / DSM 644 / CCUG 34227 / NCIMB 8303 / VKM B-1760 / Hildenborough) (Desulfovibrio vulgaris).